The primary structure comprises 158 residues: Cytochrome c-type biogenesis protein CcmE (158 aa).

Residues 1–23 lie on the Cytoplasmic side of the membrane; it reads MNSQSFKNFPSLKFISKKRRKER. A helical; Signal-anchor for type II membrane protein transmembrane segment spans residues 24–44; it reads LLMVLLCLFIMAITTGLIVYA. Topologically, residues 45–158 are periplasmic; that stretch reads MRNTANFFRT…DRLKKHHDIK (114 aa). Heme contacts are provided by H138 and Y142.

This sequence belongs to the CcmE/CycJ family.

It is found in the cell inner membrane. Functionally, heme chaperone required for the biogenesis of c-type cytochromes. Transiently binds heme delivered by CcmC and transfers the heme to apo-cytochromes in a process facilitated by CcmF and CcmH. This chain is Cytochrome c-type biogenesis protein CcmE, found in Bartonella bacilliformis (strain ATCC 35685 / KC583 / Herrer 020/F12,63).